The chain runs to 101 residues: Small ribosomal subunit protein uS14 (101 aa).

It belongs to the universal ribosomal protein uS14 family. As to quaternary structure, part of the 30S ribosomal subunit. Contacts proteins S3 and S10.

Functionally, binds 16S rRNA, required for the assembly of 30S particles and may also be responsible for determining the conformation of the 16S rRNA at the A site. The protein is Small ribosomal subunit protein uS14 of Pseudomonas syringae pv. syringae (strain B728a).